We begin with the raw amino-acid sequence, 517 residues long: 2-isopropylmalate synthase (517 aa).

The Pyruvate carboxyltransferase domain occupies 5–268 (IIIFDTTLRD…DTRINTQEIH (264 aa)). 4 residues coordinate Mn(2+): D14, H202, H204, and N238. The regulatory domain stretch occupies residues 393 to 517 (SLDVITSQTI…ADLKSHKISQ (125 aa)).

The protein belongs to the alpha-IPM synthase/homocitrate synthase family. LeuA type 1 subfamily. In terms of assembly, homodimer. It depends on Mn(2+) as a cofactor.

The protein resides in the cytoplasm. The enzyme catalyses 3-methyl-2-oxobutanoate + acetyl-CoA + H2O = (2S)-2-isopropylmalate + CoA + H(+). Its pathway is amino-acid biosynthesis; L-leucine biosynthesis; L-leucine from 3-methyl-2-oxobutanoate: step 1/4. Functionally, catalyzes the condensation of the acetyl group of acetyl-CoA with 3-methyl-2-oxobutanoate (2-ketoisovalerate) to form 3-carboxy-3-hydroxy-4-methylpentanoate (2-isopropylmalate). In Histophilus somni (strain 129Pt) (Haemophilus somnus), this protein is 2-isopropylmalate synthase.